Consider the following 401-residue polypeptide: Bone morphogenetic protein 4 (401 aa).

Positions 1–19 are cleaved as a signal peptide; sequence MIPGNRMLMVILLSQVLLG. The propeptide occupies 20–287; the sequence is GTNYASLIPD…GHALTRRSKR (268 aa). 3 N-linked (GlcNAc...) asparagine glycosylation sites follow: Asn-141, Asn-204, and Asn-238. The tract at residues 279 to 299 is disordered; sequence HALTRRSKRSPKQQRPRKKNK. Positions 280-299 are enriched in basic residues; it reads ALTRRSKRSPKQQRPRKKNK. Cystine bridges form between Cys-301–Cys-366, Cys-330–Cys-398, and Cys-334–Cys-400. N-linked (GlcNAc...) asparagine glycosylation is found at Asn-343 and Asn-358.

This sequence belongs to the TGF-beta family. Homodimer; disulfide-linked. Forms heterodimers with the TGF-beta family member derriere. Part of a complex consisting of twsg1 and chrd. Interacts with tsku.

The protein resides in the secreted. It localises to the extracellular space. Its subcellular location is the extracellular matrix. Its function is as follows. Posterior-ventralizing factor in Xenopus mesoderm induction. Induces posteroventral mesoderm and counteracts dorsalizing signals such as activin. The sequence is that of Bone morphogenetic protein 4 (bmp4) from Xenopus laevis (African clawed frog).